We begin with the raw amino-acid sequence, 457 residues long: Solute carrier family 38 member 6 (457 aa).

Met1 is modified (N-acetylmethionine). Ser4 and Ser7 each carry phosphoserine. 5 helical membrane passes run 48–68, 70–90, 112–132, 171–191, and 192–212; these read FGLS…LGLA, VMAN…ALLA, LGLF…IIIQ, LLII…KIGF, and LGYT…VVVI. Cysteines 219 and 239 form a disulfide. A run of 6 helical transmembrane segments spans residues 251–271, 289–309, 328–348, 372–392, 395–415, and 432–452; these read VYAI…LPIY, AIAL…LTFY, VIVM…APLI, SLTT…VPDI, VFGV…PGLF, and ALFL…LIIF.

It belongs to the amino acid/polyamine transporter 2 family. Expressed exclusively in neurons and not in astrocytes and glia cells. Highly expressed in the synapse. Highly expressed in glutamatergic neurons. Primarily expressed in excitatory neurons, with some minor expression in inhibitory neurons.

It localises to the cell membrane. Its subcellular location is the synapse. The enzyme catalyses L-glutamine(out) = L-glutamine(in). The catalysed reaction is L-glutamate(out) = L-glutamate(in). Its function is as follows. Amino acid transporter with an apparent selectivity for L-glutamine and L-glutamate. May facilitate glutamine uptake in excitatory neurons. The transport mechanism remains to be elucidated. The sequence is that of Solute carrier family 38 member 6 from Mus musculus (Mouse).